A 761-amino-acid chain; its full sequence is Subtilisin-like protease SBT3.15 (761 aa).

A signal peptide spans 1–21 (MENSFLSSKLVFLLAIALVLF). Residues 22–120 (LNTELSFLTA…VIPNRILKLK (99 aa)) constitute a propeptide, activation peptide. One can recognise an Inhibitor I9 domain in the interval 41 to 119 (VYIVYLGQRE…HVIPNRILKL (79 aa)). A Peptidase S8 domain is found at 134 to 613 (PTSFSSSSSA…GGLVNPEKAA (480 aa)). Asparagine 151 carries N-linked (GlcNAc...) asparagine glycosylation. Aspartate 164 (charge relay system) is an active-site residue. Asparagine 197 is a glycosylation site (N-linked (GlcNAc...) asparagine). The active-site Charge relay system is histidine 241. N-linked (GlcNAc...) asparagine glycosylation is found at asparagine 256 and asparagine 384. Serine 544 acts as the Charge relay system in catalysis. N-linked (GlcNAc...) asparagine glycosylation occurs at asparagine 636.

It belongs to the peptidase S8 family.

The protein resides in the secreted. This is Subtilisin-like protease SBT3.15 from Arabidopsis thaliana (Mouse-ear cress).